A 116-amino-acid polypeptide reads, in one-letter code: Small ribosomal subunit protein uS13 (116 aa).

The segment at 92 to 116 is disordered; that stretch reads RRGLPVRGQNTKNNARTRKGAKRSR. Positions 106–116 are enriched in basic residues; it reads ARTRKGAKRSR.

It belongs to the universal ribosomal protein uS13 family. In terms of assembly, part of the 30S ribosomal subunit. Forms a loose heterodimer with protein S19. Forms two bridges to the 50S subunit in the 70S ribosome.

Located at the top of the head of the 30S subunit, it contacts several helices of the 16S rRNA. In the 70S ribosome it contacts the 23S rRNA (bridge B1a) and protein L5 of the 50S subunit (bridge B1b), connecting the 2 subunits; these bridges are implicated in subunit movement. Contacts the tRNAs in the A and P-sites. In Lactobacillus delbrueckii subsp. bulgaricus (strain ATCC 11842 / DSM 20081 / BCRC 10696 / JCM 1002 / NBRC 13953 / NCIMB 11778 / NCTC 12712 / WDCM 00102 / Lb 14), this protein is Small ribosomal subunit protein uS13.